Here is a 218-residue protein sequence, read N- to C-terminus: MTDTTLIIRQLGIQDYQQVWQQMREFTDTRNVLTADEIWLVQHPAVFTQGQAGKPEHLLNPTDIPVVQSDRGGQITYHGLGQQIMYVLIDIKRHKANGSELNVRQLVTALEQSVVSTLADYGIKSYPKADAPGVYVNEQKICSLGLRIRKGCSFHGLALNINMDLSPFRQINPCGYIGLEMCQMADFIPTEQAQCDKVAPKLVTHFTQLLGYNDVTTY.

Positions 32-214 (VLTADEIWLV…HFTQLLGYND (183 aa)) constitute a BPL/LPL catalytic domain. Substrate-binding positions include 71 to 78 (RGGQITYH), 143 to 145 (SLG), and 156 to 158 (GLA). C174 (acyl-thioester intermediate) is an active-site residue.

This sequence belongs to the LipB family.

The protein localises to the cytoplasm. It catalyses the reaction octanoyl-[ACP] + L-lysyl-[protein] = N(6)-octanoyl-L-lysyl-[protein] + holo-[ACP] + H(+). The protein operates within protein modification; protein lipoylation via endogenous pathway; protein N(6)-(lipoyl)lysine from octanoyl-[acyl-carrier-protein]: step 1/2. Catalyzes the transfer of endogenously produced octanoic acid from octanoyl-acyl-carrier-protein onto the lipoyl domains of lipoate-dependent enzymes. Lipoyl-ACP can also act as a substrate although octanoyl-ACP is likely to be the physiological substrate. The protein is Octanoyltransferase of Histophilus somni (strain 2336) (Haemophilus somnus).